The sequence spans 423 residues: Sulfate adenylyltransferase (423 aa).

Residues Gln207 and Arg209 each contribute to the sulfate site. Residues 207 to 210 and 301 to 304 contribute to the ATP site; these read QLRN and GRDH. Residues Arg209 and Asn210 contribute to the active site. Ala305 provides a ligand contact to sulfate.

The protein belongs to the sulfate adenylyltransferase family.

It is found in the mitosome. It carries out the reaction sulfate + ATP + H(+) = adenosine 5'-phosphosulfate + diphosphate. The protein operates within sulfur metabolism; hydrogen sulfide biosynthesis; sulfite from sulfate: step 1/3. Catalyzes the first intracellular reaction of sulfate assimilation, forming adenosine-5'-phosphosulfate (APS) from inorganic sulfate and ATP. The sequence is that of Sulfate adenylyltransferase from Entamoeba histolytica (strain ATCC 30459 / HM-1:IMSS / ABRM).